Reading from the N-terminus, the 219-residue chain is MSESTLHVRYLGKQDYESVWHAMQDYTDNRDASSPDQLWIVEHPPVFTQGQAGKSEHILNPGDIPVIQVDRGGQVTYHGPGQLVAYPLINIKRLKIGVRQLVTDIENSIVQMLEGYQVKAYAKADAPGVYVDERKVASLGLRIRKGCSFHGLALNVDMDMSPFQRINPCGYAGLEMVQCKQLGGPQTVEEAGERLVKTFSHNLGYQNLIHHQGLSESYE.

Positions A32–N207 constitute a BPL/LPL catalytic domain. Residues R71–H78, S138–G140, and G151–A153 each bind substrate. The active-site Acyl-thioester intermediate is C169.

Belongs to the LipB family.

Its subcellular location is the cytoplasm. It catalyses the reaction octanoyl-[ACP] + L-lysyl-[protein] = N(6)-octanoyl-L-lysyl-[protein] + holo-[ACP] + H(+). Its pathway is protein modification; protein lipoylation via endogenous pathway; protein N(6)-(lipoyl)lysine from octanoyl-[acyl-carrier-protein]: step 1/2. Catalyzes the transfer of endogenously produced octanoic acid from octanoyl-acyl-carrier-protein onto the lipoyl domains of lipoate-dependent enzymes. Lipoyl-ACP can also act as a substrate although octanoyl-ACP is likely to be the physiological substrate. This chain is Octanoyltransferase, found in Shewanella sediminis (strain HAW-EB3).